The primary structure comprises 438 residues: Enolase (438 aa).

Positions 159 and 168 each coordinate substrate. Glu211 functions as the Proton donor in the catalytic mechanism. Mg(2+)-binding residues include Asp246, Glu297, and Asp322. 2 residues coordinate substrate: Glu297 and Asp322. Lys347 (proton acceptor) is an active-site residue. Substrate contacts are provided by residues 374 to 377 and Lys398; that span reads SHRS.

The protein belongs to the enolase family. Homodimer. Mg(2+) serves as cofactor.

Its subcellular location is the cytoplasm. The enzyme catalyses (2R)-2-phosphoglycerate = phosphoenolpyruvate + H2O. It functions in the pathway carbohydrate degradation; glycolysis; pyruvate from D-glyceraldehyde 3-phosphate: step 4/5. The chain is Enolase (emp-7) from Neurospora crassa (strain ATCC 24698 / 74-OR23-1A / CBS 708.71 / DSM 1257 / FGSC 987).